Consider the following 320-residue polypeptide: Pyrroline-5-carboxylate reductase 2 (320 aa).

At S2 the chain carries N-acetylserine. Residues 6–11 (IGAGQL) and S34 contribute to the NADP(+) site. NADPH contacts are provided by A8, Q10, L11, S34, E36, N56, V70, K71, and A97. NADP(+)-binding positions include N56, 69–72 (AVKP), and 95–97 (CAA). An L-proline-binding site is contributed by E164. N230 lines the NADPH pocket. L-proline-binding residues include A237 and T238. The segment at 298–320 (TTLTPTSSGKLLTRSPVPGGKKD) is disordered. S304 bears the Phosphoserine mark.

Belongs to the pyrroline-5-carboxylate reductase family. Homodecamer; composed of 5 homodimers. Interacts with LTO1.

Its subcellular location is the cytoplasm. The protein localises to the mitochondrion. The enzyme catalyses L-proline + NADP(+) = (S)-1-pyrroline-5-carboxylate + NADPH + 2 H(+). It carries out the reaction L-proline + NAD(+) = (S)-1-pyrroline-5-carboxylate + NADH + 2 H(+). Its pathway is amino-acid biosynthesis; L-proline biosynthesis; L-proline from L-glutamate 5-semialdehyde: step 1/1. Oxidoreductase that catalyzes the last step in proline biosynthesis, which corresponds to the reduction of pyrroline-5-carboxylate to L-proline using NAD(P)H. At physiologic concentrations, has higher specific activity in the presence of NADH. Involved in cellular response to oxidative stress. In some cell types, such as erythrocytes, its primary function may be the generation of NADP(+). The protein is Pyrroline-5-carboxylate reductase 2 (PYCR2) of Bos taurus (Bovine).